The chain runs to 103 residues: uncharacterized protein (103 aa).

The signal sequence occupies residues 1–13 (MLLSSIVSFVADA). N-linked (GlcNAc...) asparagine glycosylation is present at Asn67. The tract at residues 73 to 103 (LSSDSNRNIIDNSNNNQHPSSSSTSTSWKKF) is disordered.

It localises to the secreted. This is an uncharacterized protein from Dictyostelium discoideum (Social amoeba).